A 235-amino-acid polypeptide reads, in one-letter code: Probable transcriptional regulatory protein CJJ81176_1187 (235 aa).

It belongs to the TACO1 family.

It localises to the cytoplasm. This is Probable transcriptional regulatory protein CJJ81176_1187 from Campylobacter jejuni subsp. jejuni serotype O:23/36 (strain 81-176).